The primary structure comprises 364 residues: tRNA/tmRNA (uracil-C(5))-methyltransferase (364 aa).

5 residues coordinate S-adenosyl-L-methionine: glutamine 188, tyrosine 216, asparagine 221, glutamate 237, and aspartate 297. Cysteine 322 functions as the Nucleophile in the catalytic mechanism. Glutamate 356 functions as the Proton acceptor in the catalytic mechanism.

It belongs to the class I-like SAM-binding methyltransferase superfamily. RNA M5U methyltransferase family. TrmA subfamily.

It carries out the reaction uridine(54) in tRNA + S-adenosyl-L-methionine = 5-methyluridine(54) in tRNA + S-adenosyl-L-homocysteine + H(+). The enzyme catalyses uridine(341) in tmRNA + S-adenosyl-L-methionine = 5-methyluridine(341) in tmRNA + S-adenosyl-L-homocysteine + H(+). Dual-specificity methyltransferase that catalyzes the formation of 5-methyluridine at position 54 (m5U54) in all tRNAs, and that of position 341 (m5U341) in tmRNA (transfer-mRNA). The polypeptide is tRNA/tmRNA (uracil-C(5))-methyltransferase (Mannheimia succiniciproducens (strain KCTC 0769BP / MBEL55E)).